Here is a 138-residue protein sequence, read N- to C-terminus: Basic phospholipase A2 homolog Ts-K49b (138 aa).

The signal sequence occupies residues 1 to 16 (MRTLWIMAVLLVGVEG). Disulfide bonds link cysteine 42–cysteine 131, cysteine 44–cysteine 60, cysteine 65–cysteine 138, cysteine 66–cysteine 104, cysteine 73–cysteine 97, and cysteine 91–cysteine 102. Residues 121 to 133 (KKKKINLKLFCKK) are important for membrane-damaging activities in eukaryotes and bacteria; heparin-binding.

Expressed by the venom gland.

It is found in the secreted. Functionally, snake venom phospholipase A2 homolog that lacks catalytic activity. It shows myotoxic and weak anticoagulant activities. A model of myotoxic mechanism has been proposed: an apo Lys49-PLA2 is activated by the entrance of a hydrophobic molecule (e.g. fatty acid) at the hydrophobic channel of the protein leading to a reorientation of a monomer. This reorientation causes a transition between 'inactive' to 'active' states, causing alignment of C-terminal and membrane-docking sites (MDoS) side-by-side and putting the membrane-disruption sites (MDiS) in the same plane, exposed to solvent and in a symmetric position for both monomers. The MDoS region stabilizes the toxin on membrane by the interaction of charged residues with phospholipid head groups. Subsequently, the MDiS region destabilizes the membrane with penetration of hydrophobic residues. This insertion causes a disorganization of the membrane, allowing an uncontrolled influx of ions (i.e. calcium and sodium), and eventually triggering irreversible intracellular alterations and cell death. The sequence is that of Basic phospholipase A2 homolog Ts-K49b from Trimeresurus stejnegeri (Chinese green tree viper).